The chain runs to 609 residues: Carotenoid cleavage dioxygenase 7, chloroplastic (609 aa).

The transit peptide at 1-34 directs the protein to the chloroplast; it reads MATQAIAPMHAAVVHRHHVLPPRRCVRRRGVFVR. The Fe cation site is built by histidine 263, histidine 316, histidine 394, and histidine 603.

It belongs to the carotenoid oxygenase family. The cofactor is Fe(2+). In terms of tissue distribution, expressed in vascular bundles of roots, leaves, stems and panicles.

Its subcellular location is the plastid. It localises to the chloroplast. It catalyses the reaction 9-cis-beta-carotene + O2 = 9-cis-10'-apo-beta-carotenal + beta-ionone. Its function is as follows. Involved in strigolactones biosynthesis by cleaving asymmetrically a variety of linear and cyclic carotenoids at the 9-10 double bond. Produces one C(13) beta-ionone and the C(27) 10'-apo-beta-carotenal. Strigolactones are hormones that inhibit tillering and shoot branching through the MAX-dependent pathway, contribute to the regulation of shoot architectural response to phosphate-limiting conditions and function as rhizosphere signal that stimulates hyphal branching of arbuscular mycorrhizal fungi and trigger seed germination of root parasitic weeds. Can rescue the phenotype in the Arabidopsis max3 mutant. This chain is Carotenoid cleavage dioxygenase 7, chloroplastic (CCD7), found in Oryza sativa subsp. japonica (Rice).